The following is a 501-amino-acid chain: Cobyric acid synthase (501 aa).

The GATase cobBQ-type domain maps to 252 to 443 (DLDVAVIDLD…LHGIFDNPYW (192 aa)). Catalysis depends on cysteine 333, which acts as the Nucleophile. Residue histidine 435 is part of the active site.

This sequence belongs to the CobB/CobQ family. CobQ subfamily.

The protein operates within cofactor biosynthesis; adenosylcobalamin biosynthesis. Its function is as follows. Catalyzes amidations at positions B, D, E, and G on adenosylcobyrinic A,C-diamide. NH(2) groups are provided by glutamine, and one molecule of ATP is hydrogenolyzed for each amidation. The chain is Cobyric acid synthase from Limosilactobacillus reuteri (strain DSM 20016) (Lactobacillus reuteri).